The primary structure comprises 464 residues: UDP-glycosyltransferase 83A1 (464 aa).

Residues S295, 341–343 (APQ), 358–366 (HCGWNSTLE), and 380–383 (FADQ) contribute to the UDP-alpha-D-glucose site.

This sequence belongs to the UDP-glycosyltransferase family.

The chain is UDP-glycosyltransferase 83A1 (UGT83A1) from Arabidopsis thaliana (Mouse-ear cress).